A 1232-amino-acid polypeptide reads, in one-letter code: Anion exchange protein 3 (1232 aa).

The span at 1–11 (MANGVIPPPGG) shows a compositional bias: pro residues. Disordered regions lie at residues 1–316 (MANG…KLDR) and 429–498 (NDDK…GDGH). The Cytoplasmic segment spans residues 1–708 (MANGVIPPPG…DLRDALHSQC (708 aa)). Residues 58–75 (DPEKPSRSYSERDFEFHR) show a composition bias toward basic and acidic residues. 2 stretches are compositionally biased toward basic residues: residues 76-97 (HTSH…KLRR) and 104-113 (RHTRRKRKKE). The span at 134 to 152 (VEEEEEEEEEEEGESEAEP) shows a compositional bias: acidic residues. Phosphoserine occurs at positions 167, 170, 175, and 198. Low complexity predominate over residues 200–214 (QHSSSSPSPRAQASR). Positions 267 to 279 (DDMKSHRLEDNPG) are enriched in basic and acidic residues. The span at 280 to 289 (VRRHLVKKPS) shows a compositional bias: basic residues. R295 bears the Omega-N-methylarginine mark. Residues 305 to 316 (LRRKKKKKKLDR) are compositionally biased toward basic residues. Positions 440-450 (NPSSSSMNSVL) are enriched in polar residues. Residues 481 to 498 (HDPDAKEKPLHMPGGDGH) are compositionally biased toward basic and acidic residues. 5 helical membrane-spanning segments follow: residues 709–731 (VAAV…GLLG), 737–774 (LMGV…LLVF), 794–816 (VWVG…SFLV), 826–847 (IFAF…YKVF), and 893–910 (ALLS…AFFL). Residues 709 to 1232 (VAAVLFIYFA…DEYNELHMPV (524 aa)) form a membrane (anion exchange) region. At 911–925 (RKFRNSRFLGGKARR) the chain is on the cytoplasmic side. 5 helical membrane passes run 926–946 (IIGD…DYSI), 980–1002 (PFPP…LIFM), 1028–1049 (LLLI…LTAA), 1083–1128 (VTGV…IQLS), and 1155–1191 (MHLF…TVPL). C1165 carries S-palmitoyl cysteine lipidation.

This sequence belongs to the anion exchanger (TC 2.A.31) family.

Its subcellular location is the cell membrane. It catalyses the reaction hydrogencarbonate(in) + chloride(out) = hydrogencarbonate(out) + chloride(in). In terms of biological role, sodium-independent anion exchanger which mediates the electroneutral exchange of chloride for bicarbonate ions across the cell membrane. May be involved in the regulation of intracellular pH, and the modulation of cardiac action potential. The sequence is that of Anion exchange protein 3 (SLC4A3) from Pongo abelii (Sumatran orangutan).